Here is a 277-residue protein sequence, read N- to C-terminus: Undecaprenyl-diphosphatase (277 aa).

6 helical membrane-spanning segments follow: residues 88-108 (MGWLVILGSLPIIVLGLLFQD), 117-137 (MWIVATMLIVFGMILAVADAV), 157-179 (FAQAMALIPGVSRSGGTITAGLL), 191-211 (SFLLAIPAVFGSGLYQLYKTV), 227-247 (LATVIAFVVGYVIIGWFLKFV), and 255-275 (FVWYRILLGLALYVLLGFNVI).

This sequence belongs to the UppP family.

It localises to the cell membrane. The enzyme catalyses di-trans,octa-cis-undecaprenyl diphosphate + H2O = di-trans,octa-cis-undecaprenyl phosphate + phosphate + H(+). Functionally, catalyzes the dephosphorylation of undecaprenyl diphosphate (UPP). Confers resistance to bacitracin. This is Undecaprenyl-diphosphatase from Paenarthrobacter aurescens (strain TC1).